The chain runs to 101 residues: Small ribosomal subunit protein uS10 (101 aa).

Belongs to the universal ribosomal protein uS10 family. In terms of assembly, part of the 30S ribosomal subunit.

In terms of biological role, involved in the binding of tRNA to the ribosomes. This Porphyromonas gingivalis (strain ATCC 33277 / DSM 20709 / CIP 103683 / JCM 12257 / NCTC 11834 / 2561) protein is Small ribosomal subunit protein uS10.